The primary structure comprises 219 residues: 7-cyano-7-deazaguanine synthase (219 aa).

10 to 20 (FSGGQDSTTCL) lines the ATP pocket. The Zn(2+) site is built by Cys188, Cys196, Cys199, and Cys202.

This sequence belongs to the QueC family. Requires Zn(2+) as cofactor.

The enzyme catalyses 7-carboxy-7-deazaguanine + NH4(+) + ATP = 7-cyano-7-deazaguanine + ADP + phosphate + H2O + H(+). It functions in the pathway purine metabolism; 7-cyano-7-deazaguanine biosynthesis. Functionally, catalyzes the ATP-dependent conversion of 7-carboxy-7-deazaguanine (CDG) to 7-cyano-7-deazaguanine (preQ(0)). The protein is 7-cyano-7-deazaguanine synthase of Neisseria meningitidis serogroup B (strain ATCC BAA-335 / MC58).